The chain runs to 258 residues: tRNA (guanine-N(7)-)-methyltransferase (258 aa).

The disordered stretch occupies residues 1-42 (MPETPLMRDNGPVNHADQDAPAVPEEGQTKDSKGSRLHPRVT). Residues Glu90, Glu115, Asp142, and Asp165 each coordinate S-adenosyl-L-methionine. Residue Asp165 is part of the active site. Residues Lys169, Asp201, and 235-238 (TKFE) each bind substrate.

It belongs to the class I-like SAM-binding methyltransferase superfamily. TrmB family.

It catalyses the reaction guanosine(46) in tRNA + S-adenosyl-L-methionine = N(7)-methylguanosine(46) in tRNA + S-adenosyl-L-homocysteine. Its pathway is tRNA modification; N(7)-methylguanine-tRNA biosynthesis. In terms of biological role, catalyzes the formation of N(7)-methylguanine at position 46 (m7G46) in tRNA. The chain is tRNA (guanine-N(7)-)-methyltransferase from Rhodococcus jostii (strain RHA1).